A 223-amino-acid chain; its full sequence is NADH-quinone oxidoreductase subunit C (223 aa).

Belongs to the complex I 30 kDa subunit family. As to quaternary structure, NDH-1 is composed of 14 different subunits. Subunits NuoB, C, D, E, F, and G constitute the peripheral sector of the complex.

It is found in the cell inner membrane. The enzyme catalyses a quinone + NADH + 5 H(+)(in) = a quinol + NAD(+) + 4 H(+)(out). In terms of biological role, NDH-1 shuttles electrons from NADH, via FMN and iron-sulfur (Fe-S) centers, to quinones in the respiratory chain. The immediate electron acceptor for the enzyme in this species is believed to be ubiquinone. Couples the redox reaction to proton translocation (for every two electrons transferred, four hydrogen ions are translocated across the cytoplasmic membrane), and thus conserves the redox energy in a proton gradient. This is NADH-quinone oxidoreductase subunit C from Hydrogenovibrio crunogenus (strain DSM 25203 / XCL-2) (Thiomicrospira crunogena).